Here is a 498-residue protein sequence, read N- to C-terminus: UDP-N-acetylmuramoylalanine--D-glutamate ligase (498 aa).

119–125 serves as a coordination point for ATP; the sequence is GTNGKST.

It belongs to the MurCDEF family.

It is found in the cytoplasm. It catalyses the reaction UDP-N-acetyl-alpha-D-muramoyl-L-alanine + D-glutamate + ATP = UDP-N-acetyl-alpha-D-muramoyl-L-alanyl-D-glutamate + ADP + phosphate + H(+). The protein operates within cell wall biogenesis; peptidoglycan biosynthesis. Functionally, cell wall formation. Catalyzes the addition of glutamate to the nucleotide precursor UDP-N-acetylmuramoyl-L-alanine (UMA). The protein is UDP-N-acetylmuramoylalanine--D-glutamate ligase of Wolbachia sp. subsp. Brugia malayi (strain TRS).